Consider the following 266-residue polypeptide: Ribonuclease HII (266 aa).

The RNase H type-2 domain occupies 73–266 (SPVAGVDEAG…NCGSRQKCEG (194 aa)). Residues aspartate 79, glutamate 80, and aspartate 173 each contribute to the a divalent metal cation site.

Belongs to the RNase HII family. Mn(2+) serves as cofactor. Mg(2+) is required as a cofactor.

It localises to the cytoplasm. The enzyme catalyses Endonucleolytic cleavage to 5'-phosphomonoester.. Endonuclease that specifically degrades the RNA of RNA-DNA hybrids. This chain is Ribonuclease HII, found in Pelotomaculum thermopropionicum (strain DSM 13744 / JCM 10971 / SI).